The chain runs to 290 residues: Sodium/potassium-transporting ATPase subunit beta-2 (290 aa).

Topologically, residues 1-39 are cytoplasmic; the sequence is MVIQKEKKSCGQVVEEWKEFVWNPRTHQFMGRTGTSWAF. A helical; Signal-anchor for type II membrane protein membrane pass occupies residues 40–67; sequence ILLFYLVFYGFLTAMFTLTMWVMLQTVS. Residues 68–290 lie on the Extracellular side of the membrane; sequence DHTPKYQDRL…VAFKLRINKT (223 aa). N96 and N118 each carry an N-linked (GlcNAc...) asparagine glycan. A disulfide bond links C129 and C150. N153 and N159 each carry an N-linked (GlcNAc...) asparagine glycan. A disulfide bond links C160 and C177. 3 N-linked (GlcNAc...) asparagine glycosylation sites follow: N193, N197, and N238. The tract at residues 193-290 is immunoglobulin-like; it reads NQSMNVTCAG…VAFKLRINKT (98 aa). A disulfide bond links C200 and C261.

It belongs to the X(+)/potassium ATPases subunit beta family. As to quaternary structure, the sodium/potassium-transporting ATPase is composed of a catalytic alpha subunit, an auxiliary non-catalytic beta subunit and an additional regulatory subunit. Interacts with isoform 2 of BSG.

It is found in the cell membrane. In terms of biological role, this is the non-catalytic component of the active enzyme, which catalyzes the hydrolysis of ATP coupled with the exchange of Na(+) and K(+) ions across the plasma membrane. The exact function of the beta-2 subunit is not known. Mediates cell adhesion of neurons and astrocytes, and promotes neurite outgrowth. This chain is Sodium/potassium-transporting ATPase subunit beta-2 (ATP1B2), found in Homo sapiens (Human).